The chain runs to 228 residues: Ribosomal RNA small subunit methyltransferase G (228 aa).

S-adenosyl-L-methionine-binding positions include G89, L94, 140–141, and R159; that span reads VE.

The protein belongs to the methyltransferase superfamily. RNA methyltransferase RsmG family.

The protein localises to the cytoplasm. It carries out the reaction guanosine(527) in 16S rRNA + S-adenosyl-L-methionine = N(7)-methylguanosine(527) in 16S rRNA + S-adenosyl-L-homocysteine. Its function is as follows. Specifically methylates the N7 position of guanine in position 527 of 16S rRNA. The polypeptide is Ribosomal RNA small subunit methyltransferase G (Burkholderia ambifaria (strain MC40-6)).